We begin with the raw amino-acid sequence, 184 residues long: MKNVTDSFVSLGHWPSAGSFGFNTDILATNLINLSVVLGVLIFFGKGVLSDLLDNRKQRILNTIRNSEELREGAIEQLEKARARLRKVEIEADEFRVNGYSEIEREKLNLIDSTYKTLEQLENYKNETINFEQQKASNQVRQRVFQQALQGALGTLNSCLNNELHLRTISANIGILAAMKQITD.

The helical transmembrane segment at 27–49 (LATNLINLSVVLGVLIFFGKGVL) threads the bilayer.

This sequence belongs to the ATPase B chain family. As to quaternary structure, F-type ATPases have 2 components, F(1) - the catalytic core - and F(0) - the membrane proton channel. F(1) has five subunits: alpha(3), beta(3), gamma(1), delta(1), epsilon(1). F(0) has four main subunits: a(1), b(1), b'(1) and c(10-14). The alpha and beta chains form an alternating ring which encloses part of the gamma chain. F(1) is attached to F(0) by a central stalk formed by the gamma and epsilon chains, while a peripheral stalk is formed by the delta, b and b' chains.

It localises to the plastid. The protein resides in the chloroplast thylakoid membrane. Functionally, f(1)F(0) ATP synthase produces ATP from ADP in the presence of a proton or sodium gradient. F-type ATPases consist of two structural domains, F(1) containing the extramembraneous catalytic core and F(0) containing the membrane proton channel, linked together by a central stalk and a peripheral stalk. During catalysis, ATP synthesis in the catalytic domain of F(1) is coupled via a rotary mechanism of the central stalk subunits to proton translocation. Component of the F(0) channel, it forms part of the peripheral stalk, linking F(1) to F(0). The polypeptide is ATP synthase subunit b, chloroplastic (Guizotia abyssinica (Niger)).